The chain runs to 25 residues: Caerin-1.17 (25 aa).

L25 is subject to Leucine amide.

The protein belongs to the frog skin active peptide (FSAP) family. Caerin subfamily. In terms of tissue distribution, expressed by the skin dorsal glands.

It localises to the secreted. In terms of biological role, caerin-1.17 shows significant activity against Gram-positive organisms, but is less effective against Gram-negative organisms. This Ranoidea gracilenta (Dainty green tree frog) protein is Caerin-1.17.